The following is a 688-amino-acid chain: SRSF protein kinase 2 (688 aa).

Residues 1–65 (MSVNSEKSSS…EQEDPADYCK (65 aa)) form a disordered region. The span at 22 to 43 (LVPPPPPPPPPPPPPLPDPTPP) shows a compositional bias: pro residues. The span at 44–61 (EPEEEILGSDDEEQEDPA) shows a compositional bias: acidic residues. At Ser-52 the chain carries Phosphoserine. In terms of domain architecture, Protein kinase spans 81–684 (YHVIRKLGWG…ASAGECLRHP (604 aa)). Residues 87–95 (LGWGHFSTV) and Lys-110 each bind ATP. The active-site Proton acceptor is Asp-214. Disordered stretches follow at residues 239 to 277 (WQKA…KKQK), 329 to 444 (GLEE…GRHK), and 469 to 501 (SVLS…TGDL). Residues 265 to 277 (SKNKKKKLKKKQK) are compositionally biased toward basic residues. Phosphoserine is present on Ser-380. Acidic residues predominate over residues 397 to 421 (QLDDEDDDEEDCPNPEEYNLDEPNA). A compositionally biased stretch (polar residues) spans 423–433 (SDYTYSSSYEQ). A Phosphoserine modification is found at Ser-475. At Thr-478 the chain carries Phosphothreonine. Phosphoserine occurs at positions 484, 486, and 490. Residue Thr-492 is modified to Phosphothreonine; by PKB/AKT1. Phosphoserine is present on residues Ser-494 and Ser-497. Ser-588 bears the Phosphoserine; by CK2 mark.

This sequence belongs to the protein kinase superfamily. CMGC Ser/Thr protein kinase family. Associates with U4/U6-U5 tri-small nuclear ribonucleoproteins (U4/U6-U5 tri-snRNPs). Interacts with PKB/AKT1 in a phosphorylation-dependent manner. The phosphorylated form (by PKB/AKT1) interacts with YWHAB and YWHAE. Interaction with YWHAB suppresses its cleavage by caspases and inhibits the release of its N-terminal pro-apoptotic fragment. Interacts with SFN. Interacts with ACIN1. Interacts with POLR2A/RNA polymerase II; the interaction occurs during the co-transcriptional formation of inappropriate R-loops. Requires Mg(2+) as cofactor. In terms of processing, phosphorylation at Thr-492 by PKB/AKT1 enhances its stimulatory activity in triggering cyclin-D1 (CCND1) expression and promoting apoptosis in neurons, which can be blocked by YWHAB. It also enhances its protein kinase activity toward ACIN1 and SRSF2, promotes its nuclear translocation and prevents its proteolytic cleavage. Post-translationally, proteolytically cleaved at Asp-139 and Asp-403 by caspase-3 during apoptotic cell death. Cleavage at Asp-139 which is the major site of cleavage, produces a small N-terminal fragment that translocates into nucleus and promotes VP16-induced apoptosis. In terms of tissue distribution, highly expressed in brain, moderately expressed in heart and skeletal muscle and at low levels in lung, liver, and kidney.

Its subcellular location is the cytoplasm. The protein localises to the nucleus. The protein resides in the nucleoplasm. It localises to the nucleus speckle. It is found in the chromosome. The enzyme catalyses L-seryl-[protein] + ATP = O-phospho-L-seryl-[protein] + ADP + H(+). It carries out the reaction L-threonyl-[protein] + ATP = O-phospho-L-threonyl-[protein] + ADP + H(+). Its activity is regulated as follows. Activated by phosphorylation on Ser-52 and Ser-588. In terms of biological role, serine/arginine-rich protein-specific kinase which specifically phosphorylates its substrates at serine residues located in regions rich in arginine/serine dipeptides, known as RS domains and is involved in the phosphorylation of SR splicing factors and the regulation of splicing. Promotes neuronal apoptosis by up-regulating cyclin-D1 (CCND1) expression. This is done by the phosphorylation of SRSF2, leading to the suppression of p53/TP53 phosphorylation thereby relieving the repressive effect of p53/TP53 on cyclin-D1 (CCND1) expression. Phosphorylates ACIN1, and redistributes it from the nuclear speckles to the nucleoplasm, resulting in cyclin A1 but not cyclin A2 up-regulation. Plays an essential role in spliceosomal B complex formation via the phosphorylation of DDX23/PRP28. Probably by phosphorylating DDX23, leads to the suppression of incorrect R-loops formed during transcription; R-loops are composed of a DNA:RNA hybrid and the associated non-template single-stranded DNA. Can mediate hepatitis B virus (HBV) core protein phosphorylation. Plays a negative role in the regulation of HBV replication through a mechanism not involving the phosphorylation of the core protein but by reducing the packaging efficiency of the pregenomic RNA (pgRNA) without affecting the formation of the viral core particles. In Homo sapiens (Human), this protein is SRSF protein kinase 2.